A 448-amino-acid polypeptide reads, in one-letter code: Trigger factor (448 aa).

The PPIase FKBP-type domain occupies 172-257; sequence GDRVTVDFVG…MKKIEWPHLP (86 aa).

It belongs to the FKBP-type PPIase family. Tig subfamily.

The protein resides in the cytoplasm. The catalysed reaction is [protein]-peptidylproline (omega=180) = [protein]-peptidylproline (omega=0). In terms of biological role, involved in protein export. Acts as a chaperone by maintaining the newly synthesized protein in an open conformation. Functions as a peptidyl-prolyl cis-trans isomerase. This chain is Trigger factor, found in Paraburkholderia phymatum (strain DSM 17167 / CIP 108236 / LMG 21445 / STM815) (Burkholderia phymatum).